A 529-amino-acid polypeptide reads, in one-letter code: UDP-glucuronosyltransferase 2B33 (529 aa).

The N-terminal stretch at 1 to 24 (MSVKWTSIILLIQLSFYFSSGSCG) is a signal peptide. Asparagine 67 and asparagine 68 each carry an N-linked (GlcNAc...) asparagine glycan. Residues 494-514 (IGFLLACVATVIFIIMKCCLF) form a helical membrane-spanning segment.

Belongs to the UDP-glycosyltransferase family.

The protein resides in the microsome membrane. It localises to the endoplasmic reticulum membrane. The enzyme catalyses glucuronate acceptor + UDP-alpha-D-glucuronate = acceptor beta-D-glucuronoside + UDP + H(+). Functionally, UDPGTs are of major importance in the conjugation and subsequent elimination of potentially toxic xenobiotics and endogenous compounds. This isozyme has glucuronidating capacity on estriol and does not catalyze the glucuronidation of beta-estradiol. Capable of conjugating 4-hydroxyestrone, androsterone, diclofenac, and hyodeoxycholic acid. The protein is UDP-glucuronosyltransferase 2B33 (UGT2B33) of Macaca mulatta (Rhesus macaque).